The primary structure comprises 200 residues: MLSSVWVALGLSLTCTSAFSLISPAWFQTPTFSFGILTYCSWPQGNSWNQSCVTFSSLEDIPDFAWKVSAVMLLGGWLLLAFNAIFLLSWAVAPKGLCPRRSSVPMPGVQAVAATAMIVGLLIFPIGLASPFIKEVCEASSMYYGGKCRLGWGYMTAILNAVLASLLPIISWPHTTKVQGRTIIFSSATERIIFVPEMNK.

Transmembrane regions (helical) follow at residues 5 to 27 (VWVA…PAWF), 68 to 88 (VSAV…IFLL), 113 to 133 (AATA…SPFI), and 150 to 170 (LGWG…LPII).

The protein belongs to the TMEM211 family.

The protein localises to the membrane. This chain is LHFPL tetraspan subfamily member 7 protein, found in Homo sapiens (Human).